A 262-amino-acid chain; its full sequence is Acyl-[acyl-carrier-protein]--UDP-N-acetylglucosamine O-acyltransferase (262 aa).

Belongs to the transferase hexapeptide repeat family. LpxA subfamily. In terms of assembly, homotrimer.

The protein resides in the cytoplasm. It catalyses the reaction a (3R)-hydroxyacyl-[ACP] + UDP-N-acetyl-alpha-D-glucosamine = a UDP-3-O-[(3R)-3-hydroxyacyl]-N-acetyl-alpha-D-glucosamine + holo-[ACP]. Its pathway is glycolipid biosynthesis; lipid IV(A) biosynthesis; lipid IV(A) from (3R)-3-hydroxytetradecanoyl-[acyl-carrier-protein] and UDP-N-acetyl-alpha-D-glucosamine: step 1/6. Its function is as follows. Involved in the biosynthesis of lipid A, a phosphorylated glycolipid that anchors the lipopolysaccharide to the outer membrane of the cell. This Salmonella typhi protein is Acyl-[acyl-carrier-protein]--UDP-N-acetylglucosamine O-acyltransferase.